Reading from the N-terminus, the 300-residue chain is tRNA dimethylallyltransferase (300 aa).

9–16 (GPTASGKT) is an ATP binding site. 11 to 16 (TASGKT) is a substrate binding site. The tract at residues 34-37 (DSQQ) is interaction with substrate tRNA.

It belongs to the IPP transferase family. In terms of assembly, monomer. The cofactor is Mg(2+).

It carries out the reaction adenosine(37) in tRNA + dimethylallyl diphosphate = N(6)-dimethylallyladenosine(37) in tRNA + diphosphate. Functionally, catalyzes the transfer of a dimethylallyl group onto the adenine at position 37 in tRNAs that read codons beginning with uridine, leading to the formation of N6-(dimethylallyl)adenosine (i(6)A). The sequence is that of tRNA dimethylallyltransferase from Anaeromyxobacter sp. (strain Fw109-5).